A 158-amino-acid chain; its full sequence is Cyclic pyranopterin monophosphate synthase (158 aa).

Residues 75–77 (LCH) and 111–112 (ME) contribute to the substrate site. Asp126 is an active-site residue.

This sequence belongs to the MoaC family. In terms of assembly, homohexamer; trimer of dimers.

The catalysed reaction is (8S)-3',8-cyclo-7,8-dihydroguanosine 5'-triphosphate = cyclic pyranopterin phosphate + diphosphate. The protein operates within cofactor biosynthesis; molybdopterin biosynthesis. Functionally, catalyzes the conversion of (8S)-3',8-cyclo-7,8-dihydroguanosine 5'-triphosphate to cyclic pyranopterin monophosphate (cPMP). The chain is Cyclic pyranopterin monophosphate synthase from Caulobacter vibrioides (strain ATCC 19089 / CIP 103742 / CB 15) (Caulobacter crescentus).